A 1016-amino-acid chain; its full sequence is KN motif and ankyrin repeat domain-containing protein 4 (1016 aa).

Disordered stretches follow at residues 1 to 26 (MEKI…YPYS), 70 to 91 (PRNF…QQNW), 235 to 259 (AEPE…AVQS), 401 to 485 (LSQE…LPRG), 506 to 563 (EEGS…SPQD), and 622 to 755 (AQAP…VSHL). Polar residues-rich tracts occupy residues 70-80 (PRNFSLPNSGD) and 246-258 (SHLS…SAVQ). Residues 346 to 409 (SSLKNQVLAL…KLSQERASEA (64 aa)) adopt a coiled-coil conformation. 2 stretches are compositionally biased toward basic and acidic residues: residues 401–414 (LSQE…DRTD) and 445–454 (PECRAPRAEK). Positions 460 to 469 (VQNNHKQSYP) are enriched in polar residues. Positions 632–650 (TPAPPPSTPPPPPPPPPEI) are enriched in pro residues. Residue Thr-639 is modified to Phosphothreonine. Residues 695-708 (TSGEDSSPEDLSDS) are compositionally biased toward acidic residues. 2 stretches are compositionally biased toward basic and acidic residues: residues 709-727 (ETEK…DLHP) and 745-755 (TSDRGEEVSHL). ANK repeat units lie at residues 838-868 (SGNT…NVDH), 877-905 (VMIT…NVNI), 910-939 (GGQT…DVNL), 943-973 (DGSS…NSSL), and 977-1007 (AGRT…PGRS).

The protein resides in the cytoplasm. In terms of biological role, may be involved in the control of cytoskeleton formation by regulating actin polymerization. This Mus musculus (Mouse) protein is KN motif and ankyrin repeat domain-containing protein 4 (Kank4).